A 591-amino-acid polypeptide reads, in one-letter code: Proteasome-associated ATPase (591 aa).

Residues 8–77 (DSVAAARELE…LREEVDRLGQ (70 aa)) are a coiled coil. 278–283 (GCGKTL) is a binding site for ATP. Positions 590–591 (YL) are docks into pockets in the proteasome alpha-ring.

Belongs to the AAA ATPase family. Homohexamer. Assembles into a hexameric ring structure that caps the 20S proteasome core. Strongly interacts with the prokaryotic ubiquitin-like protein Pup through a hydrophobic interface; the interacting region of ARC lies in its N-terminal coiled-coil domain. There is one Pup binding site per ARC hexamer ring. Upon ATP-binding, the C-terminus of ARC interacts with the alpha-rings of the proteasome core, possibly by binding to the intersubunit pockets.

It functions in the pathway protein degradation; proteasomal Pup-dependent pathway. In terms of biological role, ATPase which is responsible for recognizing, binding, unfolding and translocation of pupylated proteins into the bacterial 20S proteasome core particle. May be essential for opening the gate of the 20S proteasome via an interaction with its C-terminus, thereby allowing substrate entry and access to the site of proteolysis. Thus, the C-termini of the proteasomal ATPase may function like a 'key in a lock' to induce gate opening and therefore regulate proteolysis. This chain is Proteasome-associated ATPase, found in Rhodococcus jostii (strain RHA1).